The primary structure comprises 313 residues: D-alanine--D-alanine ligase (313 aa).

An ATP-grasp domain is found at 111–306; that stretch reads KQVWHSLGLP…FQQLVLAILA (196 aa). 137–192 is a binding site for ATP; that stretch reads AAELGFPLIVKPAHEGSSIGMAKVESVEALIAAWQDAARYDSQVLVEQWIAGPEYT. Mg(2+)-binding residues include aspartate 260, glutamate 273, and asparagine 275.

It belongs to the D-alanine--D-alanine ligase family. Mg(2+) serves as cofactor. It depends on Mn(2+) as a cofactor.

It is found in the cytoplasm. It catalyses the reaction 2 D-alanine + ATP = D-alanyl-D-alanine + ADP + phosphate + H(+). It participates in cell wall biogenesis; peptidoglycan biosynthesis. Functionally, cell wall formation. This chain is D-alanine--D-alanine ligase, found in Ectopseudomonas mendocina (strain ymp) (Pseudomonas mendocina).